Here is a 286-residue protein sequence, read N- to C-terminus: Putative chaperone BssE (286 aa).

ATP contacts are provided by residues 47–54 and 108–115; these read GKQGCGKS and GCVIHLEE.

It belongs to the CbbQ/NirQ/NorQ/GpvN family.

In terms of biological role, may have a role in assembly and/or activation of benzylsuccinate synthase. The chain is Putative chaperone BssE (bssE) from Thauera aromatica.